Consider the following 431-residue polypeptide: Enolase (431 aa).

Gln163 lines the (2R)-2-phosphoglycerate pocket. The Proton donor role is filled by Glu205. Asp242, Glu288, and Asp315 together coordinate Mg(2+). (2R)-2-phosphoglycerate is bound by residues Lys340, Arg369, Ser370, and Lys391. The active-site Proton acceptor is the Lys340.

This sequence belongs to the enolase family. Requires Mg(2+) as cofactor.

It is found in the cytoplasm. The protein resides in the secreted. It localises to the cell surface. It catalyses the reaction (2R)-2-phosphoglycerate = phosphoenolpyruvate + H2O. Its pathway is carbohydrate degradation; glycolysis; pyruvate from D-glyceraldehyde 3-phosphate: step 4/5. Its function is as follows. Catalyzes the reversible conversion of 2-phosphoglycerate (2-PG) into phosphoenolpyruvate (PEP). It is essential for the degradation of carbohydrates via glycolysis. The sequence is that of Enolase from Bacillus anthracis (strain A0248).